The primary structure comprises 472 residues: WASH complex subunit 1 (472 aa).

Residues 1-51 (MPQNRSVESQAYSLPLILPDLRREEAIHQITDTLQHLQTVSNDIFSRILQR) form a required for WASH complex assembly region. Disordered stretches follow at residues 294–411 (DRQD…GGDL) and 429–472 (KVPA…DWES). The span at 301 to 334 (LPPPPPPPPPPPPPPPPEPSALSPPAPPPPPLSI) shows a compositional bias: pro residues. The VCA stretch occupies residues 352 to 472 (QGAPKEVVNP…GDGDEDDWES (121 aa)). One can recognise a WH2 domain in the interval 364-386 (GRASLLESIRQAGGIGKANLRNV). Over residues 385 to 400 (NVKEKKLEKKKMKEQE) the composition is skewed to basic and acidic residues.

Belongs to the WASH1 family. As to quaternary structure, component of the WASH complex.

It is found in the early endosome membrane. The protein resides in the recycling endosome membrane. Functionally, acts as a nucleation-promoting factor at the surface of endosomes, where it recruits and activates the Arp2/3 complex to induce actin polymerization, playing a key role in the fission of tubules that serve as transport intermediates during endosome sorting. This chain is WASH complex subunit 1, found in Xenopus laevis (African clawed frog).